Here is a 143-residue protein sequence, read N- to C-terminus: Large ribosomal subunit protein uL11 (143 aa).

Belongs to the universal ribosomal protein uL11 family. As to quaternary structure, part of the ribosomal stalk of the 50S ribosomal subunit. Interacts with L10 and the large rRNA to form the base of the stalk. L10 forms an elongated spine to which L12 dimers bind in a sequential fashion forming a multimeric L10(L12)X complex. One or more lysine residues are methylated.

Functionally, forms part of the ribosomal stalk which helps the ribosome interact with GTP-bound translation factors. This Allorhizobium ampelinum (strain ATCC BAA-846 / DSM 112012 / S4) (Agrobacterium vitis (strain S4)) protein is Large ribosomal subunit protein uL11.